The following is a 591-amino-acid chain: Formate--tetrahydrofolate ligase (591 aa).

An ATP-binding site is contributed by 74-81 (TPLGEGKS).

The protein belongs to the formate--tetrahydrofolate ligase family.

It catalyses the reaction (6S)-5,6,7,8-tetrahydrofolate + formate + ATP = (6R)-10-formyltetrahydrofolate + ADP + phosphate. It functions in the pathway one-carbon metabolism; tetrahydrofolate interconversion. This chain is Formate--tetrahydrofolate ligase, found in Desulforapulum autotrophicum (strain ATCC 43914 / DSM 3382 / VKM B-1955 / HRM2) (Desulfobacterium autotrophicum).